Here is a 114-residue protein sequence, read N- to C-terminus: DNA-binding protein rrnAC3180 (114 aa).

A compositionally biased stretch (acidic residues) spans 1-11 (MSGDPSEEELE). Residues 1–45 (MSGDPSEEELEELRKKKMEQLKEQQGGEGEGQEAAQQQAEAQKQA) form a disordered region. A compositionally biased stretch (basic and acidic residues) spans 12-22 (ELRKKKMEQLK). Positions 32 to 45 (QEAAQQQAEAQKQA) are enriched in low complexity.

This sequence belongs to the PDCD5 family.

The sequence is that of DNA-binding protein rrnAC3180 from Haloarcula marismortui (strain ATCC 43049 / DSM 3752 / JCM 8966 / VKM B-1809) (Halobacterium marismortui).